A 214-amino-acid polypeptide reads, in one-letter code: Charged multivesicular body protein 2b-A (214 aa).

Residues 25–55 (QRAITRDRTALEKQEKQLEMEIKKMAKAGNK) are a coiled coil. A disordered region spans residues 178-214 (MAKAPSAAKGLPSASASKSTGISDEEIERQLKALGVD). The MIT-interacting motif motif lies at 202–212 (EEIERQLKALG).

Belongs to the SNF7 family. Probable core component of the endosomal sorting required for transport complex III (ESCRT-III). ESCRT-III components are thought to multimerize to form a flat lattice on the perimeter membrane of the endosome.

It is found in the cytoplasm. It localises to the cytosol. The protein resides in the late endosome membrane. Probable core component of the endosomal sorting required for transport complex III (ESCRT-III) which is involved in multivesicular bodies (MVBs) formation and sorting of endosomal cargo proteins into MVBs. MVBs contain intraluminal vesicles (ILVs) that are generated by invagination and scission from the limiting membrane of the endosome and mostly are delivered to lysosomes enabling degradation of membrane proteins, such as stimulated growth factor receptors, lysosomal enzymes and lipids. The polypeptide is Charged multivesicular body protein 2b-A (chmp2b-a) (Xenopus laevis (African clawed frog)).